The chain runs to 105 residues: Large ribosomal subunit protein uL24 (105 aa).

This sequence belongs to the universal ribosomal protein uL24 family. In terms of assembly, part of the 50S ribosomal subunit.

One of two assembly initiator proteins, it binds directly to the 5'-end of the 23S rRNA, where it nucleates assembly of the 50S subunit. Functionally, one of the proteins that surrounds the polypeptide exit tunnel on the outside of the subunit. This chain is Large ribosomal subunit protein uL24, found in Mycobacterium tuberculosis (strain CDC 1551 / Oshkosh).